Reading from the N-terminus, the 196-residue chain is Imidazoleglycerol-phosphate dehydratase (196 aa).

The protein belongs to the imidazoleglycerol-phosphate dehydratase family.

The protein resides in the cytoplasm. The enzyme catalyses D-erythro-1-(imidazol-4-yl)glycerol 3-phosphate = 3-(imidazol-4-yl)-2-oxopropyl phosphate + H2O. Its pathway is amino-acid biosynthesis; L-histidine biosynthesis; L-histidine from 5-phospho-alpha-D-ribose 1-diphosphate: step 6/9. The sequence is that of Imidazoleglycerol-phosphate dehydratase from Dehalococcoides mccartyi (strain CBDB1).